Consider the following 274-residue polypeptide: 2,3,4,5-tetrahydropyridine-2,6-dicarboxylate N-succinyltransferase (274 aa).

2 residues coordinate substrate: R104 and D141.

This sequence belongs to the transferase hexapeptide repeat family. As to quaternary structure, homotrimer.

The protein resides in the cytoplasm. It carries out the reaction (S)-2,3,4,5-tetrahydrodipicolinate + succinyl-CoA + H2O = (S)-2-succinylamino-6-oxoheptanedioate + CoA. It functions in the pathway amino-acid biosynthesis; L-lysine biosynthesis via DAP pathway; LL-2,6-diaminopimelate from (S)-tetrahydrodipicolinate (succinylase route): step 1/3. The polypeptide is 2,3,4,5-tetrahydropyridine-2,6-dicarboxylate N-succinyltransferase (Escherichia coli O139:H28 (strain E24377A / ETEC)).